The following is a 400-amino-acid chain: Large envelope protein (400 aa).

Met-1 carries the N-acetylmethionine modification. Gly-2 is lipidated: N-myristoyl glycine; by host. Positions Gly-2–Ala-119 are pre-S1. The tract at residues Gly-2 to Thr-174 is pre-S. Residues Gly-2–Gly-181 lie on the Virion surface; in external conformation side of the membrane. Over Gly-2–Arg-253 the chain is Intravirion; in internal conformation. Arg-4 carries an N-linked (GlcNAc...) asparagine glycan. The disordered stretch occupies residues Thr-84–His-116. A compositionally biased stretch (polar residues) spans Ser-96 to Thr-106. Residues Met-120–Thr-174 are pre-S2. A helical membrane pass occupies residues Phe-182–Ile-202. At Pro-203–Arg-253 the chain is on the intravirion; in external conformation side. Residues Phe-254 to Cys-274 form a helical membrane-spanning segment. The Virion surface segment spans residues Gln-275–Ser-348. Asn-320 is a glycosylation site (N-linked (GlcNAc...) asparagine; by host). A helical transmembrane segment spans residues Leu-349–Ile-369. The Intravirion portion of the chain corresponds to Trp-370–Trp-375. A helical membrane pass occupies residues Gly-376–Val-398. At Tyr-399–Ile-400 the chain is on the virion surface side.

Belongs to the orthohepadnavirus major surface antigen family. In its internal form (Li-HBsAg), interacts with the capsid protein and with the isoform S. Interacts with host chaperone CANX. As to quaternary structure, associates with host chaperone CANX through its pre-S2 N glycan; this association may be essential for isoform M proper secretion. In terms of assembly, interacts with isoform L. Interacts with the antigens of satellite virus HDV (HDVAgs); this interaction is required for encapsidation of HDV genomic RNA. Isoform M is N-terminally acetylated by host at a ratio of 90%, and N-glycosylated by host at the pre-S2 region. Post-translationally, myristoylated.

It localises to the virion membrane. Its function is as follows. The large envelope protein exists in two topological conformations, one which is termed 'external' or Le-HBsAg and the other 'internal' or Li-HBsAg. In its external conformation the protein attaches the virus to cell receptors and thereby initiating infection. This interaction determines the species specificity and liver tropism. This attachment induces virion internalization predominantly through caveolin-mediated endocytosis. The large envelope protein also assures fusion between virion membrane and endosomal membrane. In its internal conformation the protein plays a role in virion morphogenesis and mediates the contact with the nucleocapsid like a matrix protein. In terms of biological role, the middle envelope protein plays an important role in the budding of the virion. It is involved in the induction of budding in a nucleocapsid independent way. In this process the majority of envelope proteins bud to form subviral lipoprotein particles of 22 nm of diameter that do not contain a nucleocapsid. This chain is Large envelope protein, found in Hepatitis B virus genotype A3 (isolate Cameroon/CMR711/1994) (HBV-A).